An 87-amino-acid chain; its full sequence is Small ribosomal subunit protein bS20 (87 aa).

Basic residues predominate over residues 1 to 11 (MANHKSALKRI). The disordered stretch occupies residues 1–23 (MANHKSALKRIKQTEKRTERNRH).

It belongs to the bacterial ribosomal protein bS20 family.

In terms of biological role, binds directly to 16S ribosomal RNA. The sequence is that of Small ribosomal subunit protein bS20 from Geotalea daltonii (strain DSM 22248 / JCM 15807 / FRC-32) (Geobacter daltonii).